A 114-amino-acid chain; its full sequence is Large ribosomal subunit protein uL22 (114 aa).

It belongs to the universal ribosomal protein uL22 family. Part of the 50S ribosomal subunit.

This protein binds specifically to 23S rRNA; its binding is stimulated by other ribosomal proteins, e.g. L4, L17, and L20. It is important during the early stages of 50S assembly. It makes multiple contacts with different domains of the 23S rRNA in the assembled 50S subunit and ribosome. Its function is as follows. The globular domain of the protein is located near the polypeptide exit tunnel on the outside of the subunit, while an extended beta-hairpin is found that lines the wall of the exit tunnel in the center of the 70S ribosome. The polypeptide is Large ribosomal subunit protein uL22 (Aeromonas hydrophila subsp. hydrophila (strain ATCC 7966 / DSM 30187 / BCRC 13018 / CCUG 14551 / JCM 1027 / KCTC 2358 / NCIMB 9240 / NCTC 8049)).